Reading from the N-terminus, the 637-residue chain is Neuroendocrine convertase 2 (637 aa).

The signal sequence occupies residues M1–A24. A propeptide spanning residues E25–R108 is cleaved from the precursor. Residues Q128–V452 enclose the Peptidase S8 domain. Residues D166 and H207 each act as charge relay system in the active site. 2 cysteine pairs are disulfide-bonded: C224-C375 and C316-C346. N-linked (GlcNAc...) asparagine glycosylation occurs at N374. S383 functions as the Charge relay system in the catalytic mechanism. The P/Homo B domain occupies T460 to A596. C467 and C493 are joined by a disulfide. N513 and N523 each carry an N-linked (GlcNAc...) asparagine glycan.

This sequence belongs to the peptidase S8 family. Furin subfamily.

It localises to the cytoplasmic vesicle. It is found in the secretory vesicle. The protein resides in the secreted. It catalyses the reaction Release of protein hormones and neuropeptides from their precursors, generally by hydrolysis of -Lys-Arg-|- bonds.. Serine endopeptidase which is involved in the processing of hormone and other protein precursors at sites comprised of pairs of basic amino acid residues. Responsible for the release of glucagon from proglucagon in pancreatic A cells. This is Neuroendocrine convertase 2 (Pcsk2) from Mus musculus (Mouse).